The primary structure comprises 131 residues: Agouti-signaling protein (131 aa).

The signal sequence occupies residues M1–A20. An N-linked (GlcNAc...) asparagine glycan is attached at N38. The disordered stretch occupies residues K57 to P104. 5 disulfides stabilise this stretch: C92–C107, C99–C113, C106–C124, C110–C131, and C115–C122. Residues C92–C131 enclose the Agouti domain.

It localises to the secreted. Its function is as follows. Involved in the regulation of melanogenesis. The binding of ASP to MC1R precludes alpha-MSH initiated signaling and thus blocks production of cAMP, leading to a down-regulation of eumelanogenesis (brown/black pigment) and thus increasing synthesis of pheomelanin (yellow/red pigment). The polypeptide is Agouti-signaling protein (ASIP) (Vulpes vulpes (Red fox)).